Consider the following 371-residue polypeptide: Caytaxin (371 aa).

Residues 1 to 54 form a disordered region; that stretch reads MGTTEATLRMENVDVKEEWQDEDLPRPLPEETGVELLGSPVEDTSSPPNTLNFN. Residues 11–29 show a composition bias toward basic and acidic residues; the sequence is ENVDVKEEWQDEDLPRPLP. A compositionally biased stretch (polar residues) spans 42 to 53; that stretch reads EDTSSPPNTLNF. The interval 115-120 is required for interaction with KLC1; the sequence is ELEWGD. In terms of domain architecture, CRAL-TRIO spans 171–328; that stretch reads IRPYMKVVTH…CVLQYEEERL (158 aa). The tract at residues 190-371 is mediates interaction with GLS; sequence AIIVFAACFL…VTEDQETSMS (182 aa). Residues 331–371 are disordered; sequence RRESARPQPEFVMPRSEEKPEVAPVENRSAPVTEDQETSMS.

As to quaternary structure, interacts with KLC1; may link mitochondria to KLC1 and regulate mitochondria localization into neuron projections. Interacts with GLS; the interaction is direct and may control GLS localization, negatively regulating its activity. Interacts with PIN1 (via WW domain); upon NGF stimulation. The interaction with PIN1 and GLS is competitive. Post-translationally, cleaved by CASP3 and CASP7. The potential C-terminal product released by CASP3 cleavage may inhibit the ERK signaling pathway through MAP2K2. May be ubiquitinated by STUB1.

It localises to the cell projection. It is found in the axon. The protein localises to the dendrite. Its subcellular location is the presynapse. The protein resides in the mitochondrion. It localises to the growth cone. It is found in the cytoplasm. Functions in the development of neural tissues, particularly the postnatal maturation of the cerebellar cortex. May play a role in neurotransmission through regulation of glutaminase/GLS, an enzyme responsible for the production in neurons of the glutamate neurotransmitter. Alternatively, may regulate the localization of mitochondria within axons and dendrites. This Macaca fascicularis (Crab-eating macaque) protein is Caytaxin (ATCAY).